A 221-amino-acid chain; its full sequence is Deoxyribose-phosphate aldolase (221 aa).

The active-site Proton donor/acceptor is D91. The Schiff-base intermediate with acetaldehyde role is filled by K153. K182 acts as the Proton donor/acceptor in catalysis.

It belongs to the DeoC/FbaB aldolase family. DeoC type 1 subfamily.

The protein resides in the cytoplasm. The enzyme catalyses 2-deoxy-D-ribose 5-phosphate = D-glyceraldehyde 3-phosphate + acetaldehyde. It participates in carbohydrate degradation; 2-deoxy-D-ribose 1-phosphate degradation; D-glyceraldehyde 3-phosphate and acetaldehyde from 2-deoxy-alpha-D-ribose 1-phosphate: step 2/2. Functionally, catalyzes a reversible aldol reaction between acetaldehyde and D-glyceraldehyde 3-phosphate to generate 2-deoxy-D-ribose 5-phosphate. The chain is Deoxyribose-phosphate aldolase from Clostridium botulinum (strain Alaska E43 / Type E3).